The following is a 181-amino-acid chain: Sporozoite-associated mosquito saliva protein 1 (181 aa).

The signal sequence occupies residues 1-24 (MNSSWRVVVFLGLVILCHSRRARA).

Salivary gland (at protein level). In terms of tissue distribution, (Microbial infection) Detected with Plasmodium berghei sporozoites isolated from the saliva of infected Anopheles gambiae mosquitoes (at protein level).

The protein resides in the secreted. Its function is as follows. Decreases host neutrophil chemotaxis induced by N-formylmethionine-leucyl-phenylalanine (fMLP). (Microbial infection) Interacts with the surface of Plasmodium berghei sporozoites. Enhances sporozoite gliding activity. Enhances host hepatocyte traversal by sporozoites. The polypeptide is Sporozoite-associated mosquito saliva protein 1 (Anopheles gambiae (African malaria mosquito)).